A 469-amino-acid polypeptide reads, in one-letter code: Solute carrier family 52, riboflavin transporter, member 3 (469 aa).

Residues M1–H6 lie on the Cytoplasmic side of the membrane. A helical membrane pass occupies residues L7–L27. At P28 to Y43 the chain is on the extracellular side. The chain crosses the membrane as a helical span at residues L44–F64. Over Q65–E71 the chain is Cytoplasmic. Residues V72–L92 form a helical membrane-spanning segment. The Extracellular portion of the chain corresponds to W93 to S105. N-linked (GlcNAc...) asparagine glycosylation occurs at N94. The chain crosses the membrane as a helical span at residues I106–F126. The Cytoplasmic portion of the chain corresponds to L127–Y137. The chain crosses the membrane as a helical span at residues L138–A158. Residues Q159–P220 lie on the Extracellular side of the membrane. The N-linked (GlcNAc...) asparagine glycan is linked to N168. A helical membrane pass occupies residues L221–L241. The Cytoplasmic portion of the chain corresponds to Q242 to P297. Residue S251 is modified to Phosphoserine. A disordered region spans residues R266–E290. The chain crosses the membrane as a helical span at residues A298–L318. Topologically, residues P319–H335 are extracellular. The helical transmembrane segment at L336–P356 threads the bilayer. At H357–P361 the chain is on the cytoplasmic side. The chain crosses the membrane as a helical span at residues F362–V382. Residues M383–E396 lie on the Extracellular side of the membrane. A helical transmembrane segment spans residues I397–L417. Topologically, residues G418–S427 are cytoplasmic. The chain crosses the membrane as a helical span at residues A428 to F448. The Extracellular portion of the chain corresponds to P449–A469.

The protein belongs to the riboflavin transporter family.

The protein localises to the cell membrane. The enzyme catalyses riboflavin(in) = riboflavin(out). Functionally, plasma membrane transporter mediating the uptake by cells of the water soluble vitamin B2/riboflavin that plays a key role in biochemical oxidation-reduction reactions of the carbohydrate, lipid, and amino acid metabolism. This is Solute carrier family 52, riboflavin transporter, member 3 (SLC52A3) from Ailuropoda melanoleuca (Giant panda).